The primary structure comprises 166 residues: Sec-independent protein translocase protein TatB (166 aa).

A helical transmembrane segment spans residues 1 to 21; the sequence is MIDIAFSKLAIIGVAALVFIG. Residues 85 to 146 form a disordered region; sequence DSSLHSAWDE…SGQKSRVISG (62 aa).

Belongs to the TatB family. In terms of assembly, the Tat system comprises two distinct complexes: a TatABC complex, containing multiple copies of TatA, TatB and TatC subunits, and a separate TatA complex, containing only TatA subunits. Substrates initially bind to the TatABC complex, which probably triggers association of the separate TatA complex to form the active translocon.

The protein resides in the cell inner membrane. Part of the twin-arginine translocation (Tat) system that transports large folded proteins containing a characteristic twin-arginine motif in their signal peptide across membranes. Together with TatC, TatB is part of a receptor directly interacting with Tat signal peptides. TatB may form an oligomeric binding site that transiently accommodates folded Tat precursor proteins before their translocation. This Herminiimonas arsenicoxydans protein is Sec-independent protein translocase protein TatB.